The chain runs to 202 residues: Nascent polypeptide-associated complex subunit alpha (202 aa).

Positions 1–19 are enriched in basic and acidic residues; sequence MADPRVEELPDEEVPKTNV. The segment at 1–42 is disordered; that stretch reads MADPRVEELPDEEVPKTNVEDAGSSSESEAGDEPTIPGGAAV. One can recognise an NAC-A/B domain in the interval 46-111; it reads SRNEKKARKA…AKIEDLNATA (66 aa). The span at 117 to 126 shows a compositional bias: low complexity; sequence QQLAEAAANE. The disordered stretch occupies residues 117–165; that stretch reads QQLAEAAANEHAGHDHEHDHGKGKAPEAEAKKEEEEDDGEEVDESGLEA. Over residues 127-149 the composition is skewed to basic and acidic residues; the sequence is HAGHDHEHDHGKGKAPEAEAKKE. Positions 150 to 162 are enriched in acidic residues; sequence EEEDDGEEVDESG. One can recognise a UBA domain in the interval 163–202; the sequence is LEAKDIELVMAQANVSRKKAVKALRENDNDIVNSIMALSI.

Belongs to the NAC-alpha family. As to quaternary structure, part of the nascent polypeptide-associated complex (NAC), consisting of egd2 and egd1. NAC associates with ribosomes via egd1.

It localises to the cytoplasm. Its subcellular location is the nucleus. In terms of biological role, component of the nascent polypeptide-associated complex (NAC), a dynamic component of the ribosomal exit tunnel, protecting the emerging polypeptides from interaction with other cytoplasmic proteins to ensure appropriate nascent protein targeting. The NAC complex also promotes mitochondrial protein import by enhancing productive ribosome interactions with the outer mitochondrial membrane and blocks the inappropriate interaction of ribosomes translating non-secretory nascent polypeptides with translocation sites in the membrane of the endoplasmic reticulum. Egd2 may also be involved in transcription regulation. This Aspergillus niger (strain ATCC MYA-4892 / CBS 513.88 / FGSC A1513) protein is Nascent polypeptide-associated complex subunit alpha (egd2).